The following is a 105-amino-acid chain: Nucleoid-associated protein Lm4b_02677 (105 aa).

A compositionally biased stretch (low complexity) spans 1-16 (MRGMGNMQGMMKQMQK). The interval 1–23 (MRGMGNMQGMMKQMQKMQKEMAK) is disordered.

This sequence belongs to the YbaB/EbfC family. In terms of assembly, homodimer.

It localises to the cytoplasm. The protein resides in the nucleoid. Its function is as follows. Binds to DNA and alters its conformation. May be involved in regulation of gene expression, nucleoid organization and DNA protection. The polypeptide is Nucleoid-associated protein Lm4b_02677 (Listeria monocytogenes serotype 4b (strain CLIP80459)).